The sequence spans 224 residues: Thymidine kinase (224 aa).

ATP contacts are provided by residues 19-26 (GPMFAGKT) and 93-96 (DEVQ). E94 functions as the Proton acceptor in the catalytic mechanism. 4 residues coordinate Zn(2+): C150, C153, C188, and H191.

The protein belongs to the thymidine kinase family. In terms of assembly, homotetramer.

Its subcellular location is the cytoplasm. It catalyses the reaction thymidine + ATP = dTMP + ADP + H(+). This is Thymidine kinase from Mycoplasmoides gallisepticum (strain R(low / passage 15 / clone 2)) (Mycoplasma gallisepticum).